We begin with the raw amino-acid sequence, 463 residues long: Glutamate--tRNA ligase (463 aa).

A 'HIGH' region motif is present at residues 8 to 18; it reads PSPTGYLHIGG. The short motif at 236 to 240 is the 'KMSKS' region element; it reads RLSKR. Position 239 (Lys-239) interacts with ATP.

The protein belongs to the class-I aminoacyl-tRNA synthetase family. Glutamate--tRNA ligase type 1 subfamily. In terms of assembly, monomer.

It localises to the cytoplasm. The catalysed reaction is tRNA(Glu) + L-glutamate + ATP = L-glutamyl-tRNA(Glu) + AMP + diphosphate. Catalyzes the attachment of glutamate to tRNA(Glu) in a two-step reaction: glutamate is first activated by ATP to form Glu-AMP and then transferred to the acceptor end of tRNA(Glu). The chain is Glutamate--tRNA ligase from Nitrosomonas europaea (strain ATCC 19718 / CIP 103999 / KCTC 2705 / NBRC 14298).